A 216-amino-acid polypeptide reads, in one-letter code: uncharacterized protein (216 aa).

Residues Tyr-5–Ser-25 traverse the membrane as a helical segment. 2 stretches are compositionally biased toward low complexity: residues Lys-28 to Ser-67 and Lys-89 to Lys-108. The segment at Lys-28–Ser-115 is disordered. A run of 2 helical transmembrane segments spans residues Gly-137–Ile-157 and Ile-183–Ile-203.

It localises to the cell membrane. This is an uncharacterized protein from Bacillus subtilis (strain 168).